The primary structure comprises 421 residues: Cytochrome c biogenesis protein Ccs1 (421 aa).

A run of 3 helical transmembrane segments spans residues 12–32 (LRFA…GTVI), 71–91 (TWWF…CTLL), and 157–177 (IAPI…IIGS).

The protein belongs to the Ccs1/CcsB family. As to quaternary structure, may interact with CcsA.

The protein localises to the plastid. Its subcellular location is the chloroplast thylakoid membrane. In terms of biological role, required during biogenesis of c-type cytochromes (cytochrome c6 and cytochrome f) at the step of heme attachment. The protein is Cytochrome c biogenesis protein Ccs1 of Thalassiosira pseudonana (Marine diatom).